Reading from the N-terminus, the 846-residue chain is Neurofilament medium polypeptide (846 aa).

Residues 1 to 10 are compositionally biased toward polar residues; that stretch reads MSYTLDSLGN. The interval 1–52 is disordered; it reads MSYTLDSLGNPSAYRRVPTETRSSFSRVSGSPSSGFRSQSWSRGSPSTVSSS. Ser-2 is modified (N-acetylserine). Positions 2–104 are head; it reads SYTLDSLGNP…LSRSNEKEQL (103 aa). The segment covering 22–45 has biased composition (low complexity); that stretch reads RSSFSRVSGSPSSGFRSQSWSRGS. Ser-31 carries the phosphoserine modification. Arg-43 carries the omega-N-methylarginine modification. The O-linked (GlcNAc) threonine glycan is linked to Thr-48. Phosphoserine is present on Ser-98. The region spanning 100–411 is the IF rod domain; that stretch reads EKEQLQGLND…KLLEGEETRF (312 aa). A coil 1A region spans residues 104 to 135; sequence LQGLNDRFAGYIEKVHYLEQQNKEIEAEIHAL. The segment at 136–148 is linker 1; sequence RQKQASHAQLGDA. The tract at residues 149–247 is coil 1B; it reads YDQEIRELRA…EEEVADLLAQ (99 aa). Ser-225 carries the phosphoserine modification. The tract at residues 248–264 is linker 12; it reads IQASHITVERKDYLKTD. Residues 265 to 286 are coil 2A; the sequence is ISTALKEIRSQLECHSDQNMHQ. A linker 2 region spans residues 287–290; the sequence is AEEW. Residues 291 to 411 form a coil 2B region; it reads FKCRYAKLTE…KLLEGEETRF (121 aa). Tyr-319 is modified (phosphotyrosine). Phosphoserine is present on residues Ser-345, Ser-417, and Ser-429. A tail region spans residues 412-845; sequence STFSGSITGP…HAIVKEVTQG (434 aa). O-linked (GlcNAc) threonine glycosylation occurs at Thr-431. A phosphoserine mark is found at Ser-467 and Ser-483. The tract at residues 483-783 is disordered; that stretch reads SAKEEKEEAE…GEDRSDDKVV (301 aa). Positions 489 to 499 are enriched in acidic residues; the sequence is EEAEEKEEEPE. Residues 500–510 are compositionally biased toward basic and acidic residues; the sequence is VEKSPVKSPEA. Phosphoserine occurs at positions 503 and 507. Residues 511–533 show a composition bias toward acidic residues; it reads KEEEEGEKEEEEEGQEEEEEEDE. Basic and acidic residues predominate over residues 534-553; sequence GVKSDQAEEGGSEKEGSSEK. Residues Ser-537, Ser-545, Ser-550, and Ser-551 each carry the phosphoserine modification. The span at 554–575 shows a compositional bias: acidic residues; sequence DEGEQEEEGETEAEGEGEEAEA. Thr-564 bears the Phosphothreonine mark. Positions 576–603 are enriched in basic and acidic residues; sequence KEEKKTEGKVEEMAIKEEIKVEKPEKAK. A phosphoserine mark is found at Ser-604, Ser-609, Ser-643, Ser-667, Ser-687, Ser-713, Ser-721, Ser-751, and Ser-767. Basic and acidic residues-rich tracts occupy residues 610–675 and 687–709; these read PVEE…KAVE and SLEK…KAEE. Basic and acidic residues-rich tracts occupy residues 718-730 and 746-758; these read GDKS…KEDI and TQEK…EEKG. The segment covering 769–783 has biased composition (basic and acidic residues); sequence AEEKKGEDRSDDKVV.

Belongs to the intermediate filament family. As to quaternary structure, forms heterodimers with NEFL; which can further hetero-oligomerize (in vitro). Forms heterodimers with INA (in vitro). In terms of processing, there are a number of repeats of the tripeptide K-S-P, NFM is phosphorylated on a number of the serines in this motif. It is thought that phosphorylation of NFM results in the formation of interfilament cross bridges that are important in the maintenance of axonal caliber. Post-translationally, phosphorylation seems to play a major role in the functioning of the larger neurofilament polypeptides (NF-M and NF-H), the levels of phosphorylation being altered developmentally and coincidentally with a change in the neurofilament function. Phosphorylated in the head and rod regions by the PKC kinase PKN1, leading to the inhibition of polymerization. Expressed in the dorsal root ganglion neurons (at protein level).

It is found in the cytoplasm. The protein localises to the cytoskeleton. It localises to the cell projection. The protein resides in the axon. Functionally, neurofilaments usually contain three intermediate filament proteins: NEFL, NEFM, and NEFH which are involved in the maintenance of neuronal caliber. May additionally cooperate with the neuronal intermediate filament proteins PRPH and INA to form neuronal filamentous networks. The polypeptide is Neurofilament medium polypeptide (Nefm) (Rattus norvegicus (Rat)).